The following is a 39-amino-acid chain: MERTPNPNRQAVELNRTSLYLGLLLVAVLGILFSSYFFN.

Residues 18–38 (SLYLGLLLVAVLGILFSSYFF) form a helical membrane-spanning segment.

Belongs to the PsbL family. PSII is composed of 1 copy each of membrane proteins PsbA, PsbB, PsbC, PsbD, PsbE, PsbF, PsbH, PsbI, PsbJ, PsbK, PsbL, PsbM, PsbT, PsbX, PsbY, PsbZ, Psb30/Ycf12, peripheral proteins PsbO, CyanoQ (PsbQ), PsbU, PsbV and a large number of cofactors. It forms dimeric complexes.

It localises to the cellular thylakoid membrane. Its function is as follows. One of the components of the core complex of photosystem II (PSII). PSII is a light-driven water:plastoquinone oxidoreductase that uses light energy to abstract electrons from H(2)O, generating O(2) and a proton gradient subsequently used for ATP formation. It consists of a core antenna complex that captures photons, and an electron transfer chain that converts photonic excitation into a charge separation. This subunit is found at the monomer-monomer interface and is required for correct PSII assembly and/or dimerization. The chain is Photosystem II reaction center protein L from Microcystis aeruginosa (strain NIES-843 / IAM M-2473).